Consider the following 590-residue polypeptide: Leucine-rich repeat transmembrane neuronal protein 4 (590 aa).

The first 30 residues, methionine 1–alanine 30, serve as a signal peptide directing secretion. In terms of domain architecture, LRRNT spans glutamine 31–glycine 61. Residues glutamine 31–lysine 424 are Extracellular-facing. The N-linked (GlcNAc...) asparagine glycan is linked to asparagine 58. LRR repeat units follow at residues glycine 62–glycine 83, glutamine 86–glycine 107, arginine 110–proline 131, asparagine 134–glycine 155, lysine 158–aspartate 179, asparagine 182–glycine 203, lysine 206–proline 226, asparagine 230–threonine 251, serine 254–cysteine 275, and asparagine 278–alanine 299. Asparagine 126 carries N-linked (GlcNAc...) asparagine glycosylation. Asparagine 291 is a glycosylation site (N-linked (GlcNAc...) asparagine). Positions asparagine 311 to aspartate 362 constitute an LRRCT domain. A helical membrane pass occupies residues isoleucine 425–valine 445. Over serine 446 to asparagine 590 the chain is Cytoplasmic.

It belongs to the LRRTM family. As to quaternary structure, peripherally associated with AMPAR complex. AMPAR complex consists of an inner core made of 4 pore-forming GluA/GRIA proteins (GRIA1, GRIA2, GRIA3 and GRIA4) and 4 major auxiliary subunits arranged in a twofold symmetry. One of the two pairs of distinct binding sites is occupied either by CNIH2, CNIH3 or CACNG2, CACNG3. The other harbors CACNG2, CACNG3, CACNG4, CACNG8 or GSG1L. This inner core of AMPAR complex is complemented by outer core constituents binding directly to the GluA/GRIA proteins at sites distinct from the interaction sites of the inner core constituents. Outer core constituents include at least PRRT1, PRRT2, CKAMP44/SHISA9, FRRS1L and NRN1. The proteins of the inner and outer core serve as a platform for other, more peripherally associated AMPAR constituents, including LRRTM4. Alone or in combination, these auxiliary subunits control the gating and pharmacology of the AMPAR complex and profoundly impact their biogenesis and protein processing. In terms of tissue distribution, predominantly in the brain (at protein level). Also expressed in the cerebellum and other tissues.

Its subcellular location is the cell membrane. It is found in the postsynaptic cell membrane. In terms of biological role, may play a role in the development and maintenance of the vertebrate nervous system. Exhibits strong synaptogenic activity, restricted to excitatory presynaptic differentiation. This is Leucine-rich repeat transmembrane neuronal protein 4 (Lrrtm4) from Mus musculus (Mouse).